The primary structure comprises 278 residues: Esterase dbaE (278 aa).

Active-site charge relay system residues include Ser124, Asp220, and His248.

This sequence belongs to the LovG family.

It participates in secondary metabolite biosynthesis. Its function is as follows. Esterase; part of the gene cluster that mediates the biosynthesis of the antibiotic 2,4-dihydroxy-3-methyl-6-(2-oxopropyl)benzaldehyde (DHMBA) and its derivatives. The direct non-reducing polyketide synthase dbaI product is 2,4-dihydroxy-3-methyl-6-(2-oxopropyl)benzaldehyde (DHMBA), produced by condensation of one acetyl-CoA starter unit with 4 malonyl-CoA units and one methylation step. The FAD-dependent monooxygenase dbaH is responsible for the synthesis of yellow pigments derived from the oxidation of DHMBA. The roles of dbaB, C, E and F have still to be determined. The polypeptide is Esterase dbaE (Emericella nidulans (strain FGSC A4 / ATCC 38163 / CBS 112.46 / NRRL 194 / M139) (Aspergillus nidulans)).